The primary structure comprises 201 residues: 3-isopropylmalate dehydratase small subunit (201 aa).

Belongs to the LeuD family. LeuD type 1 subfamily. Heterodimer of LeuC and LeuD.

It carries out the reaction (2R,3S)-3-isopropylmalate = (2S)-2-isopropylmalate. Its pathway is amino-acid biosynthesis; L-leucine biosynthesis; L-leucine from 3-methyl-2-oxobutanoate: step 2/4. In terms of biological role, catalyzes the isomerization between 2-isopropylmalate and 3-isopropylmalate, via the formation of 2-isopropylmaleate. This Enterobacter sp. (strain 638) protein is 3-isopropylmalate dehydratase small subunit.